The primary structure comprises 404 residues: L-cysteine:1D-myo-inositol 2-amino-2-deoxy-alpha-D-glucopyranoside ligase (404 aa).

Cysteine 35 is a binding site for Zn(2+). L-cysteinyl-5'-AMP contacts are provided by residues cysteine 35–threonine 38, threonine 50, and asparagine 73–threonine 75. The short motif at isoleucine 37 to histidine 47 is the 'HIGH' region element. Residues glutamate 178–proline 183 carry the 'ERGGDP' region motif. L-cysteinyl-5'-AMP is bound at residue tryptophan 219. Cysteine 223 lines the Zn(2+) pocket. An L-cysteinyl-5'-AMP-binding site is contributed by glycine 241–aspartate 243. Histidine 248 contacts Zn(2+). Position 275 (isoleucine 275) interacts with L-cysteinyl-5'-AMP. Residues lysine 281 to serine 285 carry the 'KMSKS' region motif.

It belongs to the class-I aminoacyl-tRNA synthetase family. MshC subfamily. As to quaternary structure, monomer. It depends on Zn(2+) as a cofactor.

It catalyses the reaction 1D-myo-inositol 2-amino-2-deoxy-alpha-D-glucopyranoside + L-cysteine + ATP = 1D-myo-inositol 2-(L-cysteinylamino)-2-deoxy-alpha-D-glucopyranoside + AMP + diphosphate + H(+). Functionally, catalyzes the ATP-dependent condensation of GlcN-Ins and L-cysteine to form L-Cys-GlcN-Ins. This Salinispora tropica (strain ATCC BAA-916 / DSM 44818 / JCM 13857 / NBRC 105044 / CNB-440) protein is L-cysteine:1D-myo-inositol 2-amino-2-deoxy-alpha-D-glucopyranoside ligase.